We begin with the raw amino-acid sequence, 307 residues long: tRNA dimethylallyltransferase 1 (307 aa).

ATP is bound at residue 10 to 17; that stretch reads GPTASGKT. 12 to 17 contributes to the substrate binding site; it reads TASGKT. The interaction with substrate tRNA stretch occupies residues 35–38; it reads DSRQ.

The protein belongs to the IPP transferase family. In terms of assembly, monomer. The cofactor is Mg(2+).

The enzyme catalyses adenosine(37) in tRNA + dimethylallyl diphosphate = N(6)-dimethylallyladenosine(37) in tRNA + diphosphate. Functionally, catalyzes the transfer of a dimethylallyl group onto the adenine at position 37 in tRNAs that read codons beginning with uridine, leading to the formation of N6-(dimethylallyl)adenosine (i(6)A). The sequence is that of tRNA dimethylallyltransferase 1 from Geotalea daltonii (strain DSM 22248 / JCM 15807 / FRC-32) (Geobacter daltonii).